The chain runs to 323 residues: tRNA dimethylallyltransferase (323 aa).

An ATP-binding site is contributed by 12–19 (GPTAAGKT). 14 to 19 (TAAGKT) lines the substrate pocket. Interaction with substrate tRNA stretches follow at residues 37 to 40 (DSAL) and 161 to 165 (QRLIR).

Belongs to the IPP transferase family. In terms of assembly, monomer. Requires Mg(2+) as cofactor.

It catalyses the reaction adenosine(37) in tRNA + dimethylallyl diphosphate = N(6)-dimethylallyladenosine(37) in tRNA + diphosphate. Catalyzes the transfer of a dimethylallyl group onto the adenine at position 37 in tRNAs that read codons beginning with uridine, leading to the formation of N6-(dimethylallyl)adenosine (i(6)A). The sequence is that of tRNA dimethylallyltransferase from Pseudomonas putida (strain GB-1).